Consider the following 276-residue polypeptide: Pantothenate synthetase (276 aa).

Position 27–34 (27–34 (MGALHRGH)) interacts with ATP. Histidine 34 functions as the Proton donor in the catalytic mechanism. Glutamine 58 is a (R)-pantoate binding site. Beta-alanine is bound at residue glutamine 58. Residue 147 to 150 (GKKD) participates in ATP binding. Glutamine 153 serves as a coordination point for (R)-pantoate. Residues valine 176 and 184–187 (LSSR) each bind ATP.

Belongs to the pantothenate synthetase family. As to quaternary structure, homodimer.

The protein localises to the cytoplasm. It catalyses the reaction (R)-pantoate + beta-alanine + ATP = (R)-pantothenate + AMP + diphosphate + H(+). The protein operates within cofactor biosynthesis; (R)-pantothenate biosynthesis; (R)-pantothenate from (R)-pantoate and beta-alanine: step 1/1. Catalyzes the condensation of pantoate with beta-alanine in an ATP-dependent reaction via a pantoyl-adenylate intermediate. The protein is Pantothenate synthetase of Helicobacter pylori (strain G27).